The chain runs to 430 residues: Sesquiterpene synthase 15 (430 aa).

Residues Asp-182, Asp-186, and Glu-335 each contribute to the Mg(2+) site. Residues 182 to 186 carry the DDXXD motif motif; it reads DDIYD.

It belongs to the terpene synthase family. Tpsa subfamily. It depends on Mg(2+) as a cofactor. Mn(2+) is required as a cofactor.

It participates in secondary metabolite biosynthesis; terpenoid biosynthesis. Functionally, sesquiterpene synthase involved in the biosynthesis of volatile compounds. No activity detected with geranyl diphosphate (GPP) and farnesyl diphosphate (FPP) as substrates. This Solanum lycopersicum (Tomato) protein is Sesquiterpene synthase 15.